We begin with the raw amino-acid sequence, 214 residues long: Adenylate kinase (214 aa).

10-15 (GAGKGT) lines the ATP pocket. The tract at residues 30 to 59 (STGDMLRAAVKAGSELGLKAKEIMDAGKLV) is NMP. AMP contacts are provided by residues Thr31, Arg36, 57–59 (KLV), 85–88 (GFPR), and Gln92. An LID region spans residues 122–159 (GRRVHAPSGRVYHVTFNPPRVEGKDDMTGEELTTRKDD). ATP contacts are provided by residues Arg123 and 132–133 (VY). AMP is bound by residues Arg156 and Arg167. Arg200 is a binding site for ATP.

This sequence belongs to the adenylate kinase family. As to quaternary structure, monomer.

The protein resides in the cytoplasm. It carries out the reaction AMP + ATP = 2 ADP. The protein operates within purine metabolism; AMP biosynthesis via salvage pathway; AMP from ADP: step 1/1. Catalyzes the reversible transfer of the terminal phosphate group between ATP and AMP. Plays an important role in cellular energy homeostasis and in adenine nucleotide metabolism. The sequence is that of Adenylate kinase from Erwinia tasmaniensis (strain DSM 17950 / CFBP 7177 / CIP 109463 / NCPPB 4357 / Et1/99).